Here is a 149-residue protein sequence, read N- to C-terminus: Alpha-crystallin A chain (149 aa).

Residues 41-149 enclose the sHSP domain; sequence LFRSVLESGI…DPSHSERPIP (109 aa). Residues H89, E91, H96, and H143 each coordinate Zn(2+).

It belongs to the small heat shock protein (HSP20) family. As to quaternary structure, heteropolymer composed of three CRYAA and one CRYAB subunits. Inter-subunit bridging via zinc ions enhances stability, which is crucial as there is no protein turn over in the lens. Can also form homodimers and homotetramers (dimers of dimers) which serve as the building blocks of homooligomers. Within homooligomers, the zinc-binding motif is created from residues of 3 different molecules. His-89 and Glu-91 from one molecule are ligands of the zinc ion, and His-96 and His-143 residues from additional molecules complete the site with tetrahedral coordination geometry.

The protein localises to the cytoplasm. Its subcellular location is the nucleus. Functionally, contributes to the transparency and refractive index of the lens. May act as a chaperone, preventing aggregation of various proteins under a wide range of stress conditions. This chain is Alpha-crystallin A chain (CRYAA), found in Eudromia elegans (Elegant crested-tinamou).